The sequence spans 234 residues: Phosphoribosylaminoimidazole-succinocarboxamide synthase (234 aa).

The protein belongs to the SAICAR synthetase family.

It catalyses the reaction 5-amino-1-(5-phospho-D-ribosyl)imidazole-4-carboxylate + L-aspartate + ATP = (2S)-2-[5-amino-1-(5-phospho-beta-D-ribosyl)imidazole-4-carboxamido]succinate + ADP + phosphate + 2 H(+). It participates in purine metabolism; IMP biosynthesis via de novo pathway; 5-amino-1-(5-phospho-D-ribosyl)imidazole-4-carboxamide from 5-amino-1-(5-phospho-D-ribosyl)imidazole-4-carboxylate: step 1/2. This Pyrococcus furiosus (strain ATCC 43587 / DSM 3638 / JCM 8422 / Vc1) protein is Phosphoribosylaminoimidazole-succinocarboxamide synthase.